Reading from the N-terminus, the 608-residue chain is MEEGRDDEYCSFSNSGDRDGGLSGCFFLDHVGQVLLSRNHDGLSWKCLDSSDCEGTTCLGIIICENSETEIKFSDIYAVEFVSYGLVHSPKLGLRHAKECFRERLLNTQEMYRFTVHGFQSSPKEPCLWNLAAFTFGHMDLQTCQSWMDQLNYSLIKEVERPRNLLVFVHPKSGKGNGSKVWETVSKIFIRAKVNTKVIVTERAGHAFDVMASIQNKELHTYDGIIAVGGDGFFNEILNGYLLSRLKVPLPPSPSDSFNSVQSRGSSSVPEPGDEVHETDQKEHYPLLPDSVQEVMNFRTVNGSCEGIEDPDHPFSSERPRFGLIPAGSTDAIVMCTTGARDPVTSALHIILGRKLFLDAMQVVRWKTASTSTIEPYIRYAASFAGYGFYGDVISESEKYRWMGPKRYDYVGTKIFLKHRSYEAEVMFEEAESENSKASLHTRSKTWPFRNTTRSEKILCRANCKICNSKVGWNSASTTLNPCPEKTRWCRTKGRFLSIGAAVMSNRNERAPDGLVVDAHLSDGFLHLILIKDCSRPKYLWHLTELAKRGGEPLNFEFVEYHKTRAFTFTSFGEESVWNLDGEIFEAHQLSAQVLRGLIPLFASGPEI.

The DAGKc domain occupies 160–367; sequence ERPRNLLVFV…LDAMQVVRWK (208 aa). Residues 170-174, Thr201, and 230-236 each bind ATP; these read HPKSG and GDGFFNE. Residue 229–232 coordinates substrate; the sequence is GGDG. Asp231 serves as the catalytic Proton donor/acceptor. Residues 254–280 are disordered; the sequence is PSDSFNSVQSRGSSSVPEPGDEVHETD. Polar residues predominate over residues 255 to 269; the sequence is SDSFNSVQSRGSSSV. Ser329 is an ATP binding site.

Ca(2+) is required as a cofactor.

The catalysed reaction is an N-acylsphing-4-enine + ATP = an N-acylsphing-4-enine 1-phosphate + ADP + H(+). Its function is as follows. Catalyzes specifically the phosphorylation of ceramide to form ceramide 1-phosphate. Possesses high activity on ceramide analogs (C6, C8 synthetic ceramides) and lower activity on C6 and C8 dihydroceramides. Has weak activity on natural ceramides (a mixture of ceramides from bovine brain) and the synthetic substrate C2 ceramide. Has very poor activity on diacylglycerol and sphingosine. Ceramide is a critical sphingolipid metabolite that induces programmed cell death (PCD) in plants and ceramide-1-phosphate has a PCD suppressive effect. Thus, ceramide phosphorylation plays a role in the modulation of PCD and CERK activity is crucial for the maintenance of cell viability. This Arabidopsis thaliana (Mouse-ear cress) protein is Ceramide kinase (CERK).